We begin with the raw amino-acid sequence, 271 residues long: 3-methyl-2-oxobutanoate hydroxymethyltransferase (271 aa).

Mg(2+)-binding residues include Asp51 and Asp90. Residues 51–52 (DS), Asp90, and Lys118 contribute to the 3-methyl-2-oxobutanoate site. Glu120 provides a ligand contact to Mg(2+). Glu186 acts as the Proton acceptor in catalysis.

It belongs to the PanB family. In terms of assembly, homodecamer; pentamer of dimers. It depends on Mg(2+) as a cofactor.

Its subcellular location is the cytoplasm. It carries out the reaction 3-methyl-2-oxobutanoate + (6R)-5,10-methylene-5,6,7,8-tetrahydrofolate + H2O = 2-dehydropantoate + (6S)-5,6,7,8-tetrahydrofolate. Its pathway is cofactor biosynthesis; (R)-pantothenate biosynthesis; (R)-pantoate from 3-methyl-2-oxobutanoate: step 1/2. In terms of biological role, catalyzes the reversible reaction in which hydroxymethyl group from 5,10-methylenetetrahydrofolate is transferred onto alpha-ketoisovalerate to form ketopantoate. The sequence is that of 3-methyl-2-oxobutanoate hydroxymethyltransferase from Stenotrophomonas maltophilia (strain R551-3).